A 591-amino-acid polypeptide reads, in one-letter code: Probable translation initiation factor IF-2 (591 aa).

Positions 7 to 223 constitute a tr-type G domain; it reads LRTPIVCVMG…LLGLAQRFLE (217 aa). Residues 16 to 23 form a G1 region; that stretch reads GHVDHGKT. 16-23 provides a ligand contact to GTP; that stretch reads GHVDHGKT. A G2 region spans residues 41–45; it reads AITQH. Residues 78–81 form a G3 region; sequence DTPG. Residues 78-82 and 132-135 each bind GTP; these read DTPGH and NKID. The G4 stretch occupies residues 132 to 135; sequence NKID. The interval 200–202 is G5; the sequence is SAI.

This sequence belongs to the TRAFAC class translation factor GTPase superfamily. Classic translation factor GTPase family. IF-2 subfamily.

Function in general translation initiation by promoting the binding of the formylmethionine-tRNA to ribosomes. Seems to function along with eIF-2. The chain is Probable translation initiation factor IF-2 from Methanococcoides burtonii (strain DSM 6242 / NBRC 107633 / OCM 468 / ACE-M).